Here is a 115-residue protein sequence, read N- to C-terminus: Class I hydrophobin 21 (115 aa).

The signal sequence occupies residues 1–20 (MFAAPATMLVLAALAALSSA). Disulfide bonds link cysteine 30/cysteine 93, cysteine 37/cysteine 87, cysteine 38/cysteine 77, and cysteine 94/cysteine 107.

This sequence belongs to the fungal hydrophobin family. As to quaternary structure, self-assembles to form functional amyloid fibrils called rodlets. Self-assembly into fibrillar rodlets occurs spontaneously at hydrophobic:hydrophilic interfaces and the rodlets further associate laterally to form amphipathic monolayers.

Its subcellular location is the secreted. It localises to the cell wall. Functionally, aerial growth, conidiation, and dispersal of filamentous fungi in the environment rely upon a capability of their secreting small amphipathic proteins called hydrophobins (HPBs) with low sequence identity. Class I can self-assemble into an outermost layer of rodlet bundles on aerial cell surfaces, conferring cellular hydrophobicity that supports fungal growth, development and dispersal; whereas Class II form highly ordered films at water-air interfaces through intermolecular interactions but contribute nothing to the rodlet structure. In Pleurotus ostreatus (strain PC15) (Oyster mushroom), this protein is Class I hydrophobin 21.